We begin with the raw amino-acid sequence, 237 residues long: Ubiquinone biosynthesis O-methyltransferase (237 aa).

Positions 39, 59, 80, and 124 each coordinate S-adenosyl-L-methionine.

It belongs to the methyltransferase superfamily. UbiG/COQ3 family.

The catalysed reaction is a 3-demethylubiquinol + S-adenosyl-L-methionine = a ubiquinol + S-adenosyl-L-homocysteine + H(+). It catalyses the reaction a 3-(all-trans-polyprenyl)benzene-1,2-diol + S-adenosyl-L-methionine = a 2-methoxy-6-(all-trans-polyprenyl)phenol + S-adenosyl-L-homocysteine + H(+). The protein operates within cofactor biosynthesis; ubiquinone biosynthesis. Functionally, O-methyltransferase that catalyzes the 2 O-methylation steps in the ubiquinone biosynthetic pathway. This Vibrio atlanticus (strain LGP32) (Vibrio splendidus (strain Mel32)) protein is Ubiquinone biosynthesis O-methyltransferase.